The sequence spans 170 residues: Ribosome maturation factor RimM (170 aa).

Residues 96 to 169 (EGEFYACDVE…VVQLATLEGL (74 aa)) form the PRC barrel domain.

It belongs to the RimM family. Binds ribosomal protein uS19.

The protein localises to the cytoplasm. An accessory protein needed during the final step in the assembly of 30S ribosomal subunit, possibly for assembly of the head region. Essential for efficient processing of 16S rRNA. May be needed both before and after RbfA during the maturation of 16S rRNA. It has affinity for free ribosomal 30S subunits but not for 70S ribosomes. The sequence is that of Ribosome maturation factor RimM from Sorangium cellulosum (strain So ce56) (Polyangium cellulosum (strain So ce56)).